A 411-amino-acid chain; its full sequence is Putative competence-damage inducible protein (411 aa).

It belongs to the CinA family.

The protein is Putative competence-damage inducible protein of Caldicellulosiruptor bescii (strain ATCC BAA-1888 / DSM 6725 / KCTC 15123 / Z-1320) (Anaerocellum thermophilum).